Reading from the N-terminus, the 920-residue chain is Isoleucine--tRNA ligase (920 aa).

The 'HIGH' region signature appears at 58-68; sequence PYANGHLHLGH. E569 is an L-isoleucyl-5'-AMP binding site. Residues 610–614 carry the 'KMSKS' region motif; sequence KMSKS. ATP is bound at residue K613. 4 residues coordinate Zn(2+): C895, C898, C910, and C913.

Belongs to the class-I aminoacyl-tRNA synthetase family. IleS type 1 subfamily. In terms of assembly, monomer. Zn(2+) serves as cofactor.

The protein resides in the cytoplasm. The enzyme catalyses tRNA(Ile) + L-isoleucine + ATP = L-isoleucyl-tRNA(Ile) + AMP + diphosphate. Functionally, catalyzes the attachment of isoleucine to tRNA(Ile). As IleRS can inadvertently accommodate and process structurally similar amino acids such as valine, to avoid such errors it has two additional distinct tRNA(Ile)-dependent editing activities. One activity is designated as 'pretransfer' editing and involves the hydrolysis of activated Val-AMP. The other activity is designated 'posttransfer' editing and involves deacylation of mischarged Val-tRNA(Ile). The polypeptide is Isoleucine--tRNA ligase (Helicobacter pylori (strain J99 / ATCC 700824) (Campylobacter pylori J99)).